The primary structure comprises 341 residues: Ribonucleoside-diphosphate reductase subunit beta (341 aa).

Positions 89, 120, and 123 each coordinate Fe cation. Tyr-127 is an active-site residue. Glu-185, Glu-219, and His-222 together coordinate Fe cation.

The protein belongs to the ribonucleoside diphosphate reductase small chain family. As to quaternary structure, tetramer of two alpha and two beta subunits. Fe cation is required as a cofactor.

The enzyme catalyses a 2'-deoxyribonucleoside 5'-diphosphate + [thioredoxin]-disulfide + H2O = a ribonucleoside 5'-diphosphate + [thioredoxin]-dithiol. In terms of biological role, provides the precursors necessary for DNA synthesis. Catalyzes the biosynthesis of deoxyribonucleotides from the corresponding ribonucleotides. The polypeptide is Ribonucleoside-diphosphate reductase subunit beta (nrdB) (Helicobacter pylori (strain J99 / ATCC 700824) (Campylobacter pylori J99)).